A 955-amino-acid chain; its full sequence is 2-oxoglutarate dehydrogenase E1 component (955 aa).

The protein belongs to the alpha-ketoglutarate dehydrogenase family. Homodimer. Part of the 2-oxoglutarate dehydrogenase (OGDH) complex composed of E1 (2-oxoglutarate dehydrogenase), E2 (dihydrolipoamide succinyltransferase) and E3 (dihydrolipoamide dehydrogenase); the complex contains multiple copies of the three enzymatic components (E1, E2 and E3). It depends on thiamine diphosphate as a cofactor.

The catalysed reaction is N(6)-[(R)-lipoyl]-L-lysyl-[protein] + 2-oxoglutarate + H(+) = N(6)-[(R)-S(8)-succinyldihydrolipoyl]-L-lysyl-[protein] + CO2. Functionally, E1 component of the 2-oxoglutarate dehydrogenase (OGDH) complex which catalyzes the decarboxylation of 2-oxoglutarate, the first step in the conversion of 2-oxoglutarate to succinyl-CoA and CO(2). This Bacillus cereus (strain 03BB102) protein is 2-oxoglutarate dehydrogenase E1 component.